A 268-amino-acid chain; its full sequence is Interleukin-1 beta (268 aa).

Residues 1-116 constitute a propeptide that is removed on maturation; it reads MAEVPELASE…TRNNDACVHD (116 aa).

Belongs to the IL-1 family. In terms of assembly, monomer. In its precursor form, weakly interacts with full-length MEFV; the mature cytokine does not interact at all. Interacts with integrins ITGAV:ITGBV and ITGA5:ITGB1; integrin-binding is required for IL1B signaling. Interacts with cargo receptor TMED10; the interaction is direct and is required for the secretion of IL1B mature form. Interacts with HSP90AB1; the interaction facilitates cargo translocation into the ERGIC. Interacts with HSP90B1; the interaction facilitates cargo translocation into the ERGIC.

The protein resides in the cytoplasm. Its subcellular location is the cytosol. It is found in the secreted. The protein localises to the lysosome. It localises to the extracellular exosome. In terms of biological role, potent pro-inflammatory cytokine. Initially discovered as the major endogenous pyrogen, induces prostaglandin synthesis, neutrophil influx and activation, T-cell activation and cytokine production, B-cell activation and antibody production, and fibroblast proliferation and collagen production. Promotes Th17 differentiation of T-cells. Synergizes with IL12/interleukin-12 to induce IFNG synthesis from T-helper 1 (Th1) cells. Plays a role in angiogenesis by inducing VEGF production synergistically with TNF and IL6. Involved in transduction of inflammation downstream of pyroptosis: its mature form is specifically released in the extracellular milieu by passing through the gasdermin-D (GSDMD) pore. The polypeptide is Interleukin-1 beta (IL1B) (Macaca fascicularis (Crab-eating macaque)).